We begin with the raw amino-acid sequence, 185 residues long: MINEIKSDAQTRMDKCVESTKTQMAKVRTGRAHPSLLDTIQVPYYGSLTPLKQVASVSIGDARTLTVSVFDRTMIAAVEKAIMSSDLGLNPMSAGATIRIPLPALTEERRKDLIKVVRAEAENGRIAIRNVRRDANSNVKELEKEKECTEDDVRRSEDDVQKLTDAHIKLIDEILAAKEKELMEF.

This sequence belongs to the RRF family.

It is found in the cytoplasm. Its function is as follows. Responsible for the release of ribosomes from messenger RNA at the termination of protein biosynthesis. May increase the efficiency of translation by recycling ribosomes from one round of translation to another. The protein is Ribosome-recycling factor of Shewanella pealeana (strain ATCC 700345 / ANG-SQ1).